Here is a 700-residue protein sequence, read N- to C-terminus: Elongation factor G (700 aa).

The tr-type G domain maps to 10–285 (DRTRNIGIMA…AVIDYLPSPL (276 aa)). Residues 19 to 26 (AHIDAGKT), 83 to 87 (DTPGH), and 137 to 140 (NKMD) contribute to the GTP site.

This sequence belongs to the TRAFAC class translation factor GTPase superfamily. Classic translation factor GTPase family. EF-G/EF-2 subfamily.

It is found in the cytoplasm. Functionally, catalyzes the GTP-dependent ribosomal translocation step during translation elongation. During this step, the ribosome changes from the pre-translocational (PRE) to the post-translocational (POST) state as the newly formed A-site-bound peptidyl-tRNA and P-site-bound deacylated tRNA move to the P and E sites, respectively. Catalyzes the coordinated movement of the two tRNA molecules, the mRNA and conformational changes in the ribosome. This is Elongation factor G from Lacticaseibacillus casei (strain BL23) (Lactobacillus casei).